The following is a 354-amino-acid chain: Chorismate synthase (354 aa).

Position 48 (Arg48) interacts with NADP(+). FMN is bound by residues 125–127 (RAS), Ala280, 295–299 (KPIPS), and Arg321.

This sequence belongs to the chorismate synthase family. As to quaternary structure, homotetramer. FMNH2 is required as a cofactor.

The catalysed reaction is 5-O-(1-carboxyvinyl)-3-phosphoshikimate = chorismate + phosphate. The protein operates within metabolic intermediate biosynthesis; chorismate biosynthesis; chorismate from D-erythrose 4-phosphate and phosphoenolpyruvate: step 7/7. In terms of biological role, catalyzes the anti-1,4-elimination of the C-3 phosphate and the C-6 proR hydrogen from 5-enolpyruvylshikimate-3-phosphate (EPSP) to yield chorismate, which is the branch point compound that serves as the starting substrate for the three terminal pathways of aromatic amino acid biosynthesis. This reaction introduces a second double bond into the aromatic ring system. The polypeptide is Chorismate synthase (Syntrophus aciditrophicus (strain SB)).